Consider the following 184-residue polypeptide: UPS-like protein C36.10 (184 aa).

The region spanning 1-172 (MKIFESCHLF…VLEKINMSVF (172 aa)) is the PRELI/MSF1 domain.

The protein belongs to the slowmo family.

The protein resides in the cytoplasm. Its subcellular location is the mitochondrion inner membrane. It localises to the mitochondrion intermembrane space. Its function is as follows. Required for mitochondrial morphology. May control phospholipid metabolism in the mitochondrial intermembrane space. This Schizosaccharomyces pombe (strain 972 / ATCC 24843) (Fission yeast) protein is UPS-like protein C36.10.